We begin with the raw amino-acid sequence, 293 residues long: 4-hydroxy-3-methylbut-2-enyl diphosphate reductase (293 aa).

[4Fe-4S] cluster is bound at residue Cys-12. (2E)-4-hydroxy-3-methylbut-2-enyl diphosphate contacts are provided by His-40 and His-74. Dimethylallyl diphosphate-binding residues include His-40 and His-74. The isopentenyl diphosphate site is built by His-40 and His-74. A [4Fe-4S] cluster-binding site is contributed by Cys-96. (2E)-4-hydroxy-3-methylbut-2-enyl diphosphate is bound at residue His-128. Residue His-128 participates in dimethylallyl diphosphate binding. His-128 is a binding site for isopentenyl diphosphate. Catalysis depends on Glu-130, which acts as the Proton donor. Residue Thr-166 participates in (2E)-4-hydroxy-3-methylbut-2-enyl diphosphate binding. Cys-202 provides a ligand contact to [4Fe-4S] cluster. 4 residues coordinate (2E)-4-hydroxy-3-methylbut-2-enyl diphosphate: Ser-230, Ser-231, Asn-232, and Ser-274. Dimethylallyl diphosphate contacts are provided by Ser-230, Ser-231, Asn-232, and Ser-274. Positions 230, 231, 232, and 274 each coordinate isopentenyl diphosphate.

Belongs to the IspH family. It depends on [4Fe-4S] cluster as a cofactor.

It catalyses the reaction isopentenyl diphosphate + 2 oxidized [2Fe-2S]-[ferredoxin] + H2O = (2E)-4-hydroxy-3-methylbut-2-enyl diphosphate + 2 reduced [2Fe-2S]-[ferredoxin] + 2 H(+). It carries out the reaction dimethylallyl diphosphate + 2 oxidized [2Fe-2S]-[ferredoxin] + H2O = (2E)-4-hydroxy-3-methylbut-2-enyl diphosphate + 2 reduced [2Fe-2S]-[ferredoxin] + 2 H(+). It participates in isoprenoid biosynthesis; dimethylallyl diphosphate biosynthesis; dimethylallyl diphosphate from (2E)-4-hydroxy-3-methylbutenyl diphosphate: step 1/1. Its pathway is isoprenoid biosynthesis; isopentenyl diphosphate biosynthesis via DXP pathway; isopentenyl diphosphate from 1-deoxy-D-xylulose 5-phosphate: step 6/6. Catalyzes the conversion of 1-hydroxy-2-methyl-2-(E)-butenyl 4-diphosphate (HMBPP) into a mixture of isopentenyl diphosphate (IPP) and dimethylallyl diphosphate (DMAPP). Acts in the terminal step of the DOXP/MEP pathway for isoprenoid precursor biosynthesis. This chain is 4-hydroxy-3-methylbut-2-enyl diphosphate reductase, found in Cytophaga hutchinsonii (strain ATCC 33406 / DSM 1761 / CIP 103989 / NBRC 15051 / NCIMB 9469 / D465).